A 348-amino-acid polypeptide reads, in one-letter code: MISDLISKLQEKTDLTYDEMNQVMTDVLSGKTTDSENADFLSNLTDKGETDDELLGMLDKMQEFSLKIEPKNTGTIIDMCGTGGDKLQTFNISTTASFVVAAAGGVVAKHGNRSSSGISGSADIFEYFGYDLNLEPPKIAEILEKHNICFMFAQKFHPAMKHVSVARKQLGKRTAFNLLGPLSNPAKVKNQLVGVFSIEYLDRLPLILKRKGAQNIMTVRSDDGMDEFSTSSTNRVCVLRDDKVLMNAIDPEVVGLHKSSLTDIQIQTKEDAIESFVGVLNNTANQAMIETTALNAAGGLIVANISNNFEEAVELALNTIKDGKAFSLLEKFVQDTGDISKLKEIADG.

5-phospho-alpha-D-ribose 1-diphosphate contacts are provided by residues glycine 81, 84–85 (GD), threonine 89, 91–94 (NIST), 109–117 (KHGNRSSSG), and serine 121. Glycine 81 lines the anthranilate pocket. Serine 93 provides a ligand contact to Mg(2+). Asparagine 112 serves as a coordination point for anthranilate. An anthranilate-binding site is contributed by arginine 167. Residues aspartate 226 and glutamate 227 each coordinate Mg(2+).

The protein belongs to the anthranilate phosphoribosyltransferase family. Homodimer. Requires Mg(2+) as cofactor.

The catalysed reaction is N-(5-phospho-beta-D-ribosyl)anthranilate + diphosphate = 5-phospho-alpha-D-ribose 1-diphosphate + anthranilate. The protein operates within amino-acid biosynthesis; L-tryptophan biosynthesis; L-tryptophan from chorismate: step 2/5. In terms of biological role, catalyzes the transfer of the phosphoribosyl group of 5-phosphorylribose-1-pyrophosphate (PRPP) to anthranilate to yield N-(5'-phosphoribosyl)-anthranilate (PRA). The chain is Anthranilate phosphoribosyltransferase from Nitrosopumilus maritimus (strain SCM1).